Consider the following 174-residue polypeptide: MLPRLSFNNVSWTLLYYLFIFQVRGEDSQKAVPSTRTSCPMGSKAYRSYCYTLVTTLKSWFQADLACQKRPSGHLVSILSGGEASFVSSLVTGRVNNNQDIWIWLHDPTMGQQPNGGGWEWSNSDVLNYLNWDGDPSSTVNRGNCGSLTATSEFLKWGDHHCDVELPFVCKFKQ.

Residues 1-25 (MLPRLSFNNVSWTLLYYLFIFQVRG) form the signal peptide. The propeptide occupies 26 to 36 (EDSQKAVPSTR). Intrachain disulfides connect Cys39–Cys50, Cys67–Cys170, and Cys145–Cys162. One can recognise a C-type lectin domain in the interval 46–171 (YRSYCYTLVT…CDVELPFVCK (126 aa)). A sufficient to activate EXTL3 region spans residues 102 to 117 (WIWLHDPTMGQQPNGG). The Zn(2+) site is built by His106 and Glu120.

Forms a hexameric membrane-permeabilizing oligomeric pore on membrane phospholipids. The hexamer is formed by three dimers related by helical symmetry. Forms filaments, filamentation traps pore complexes and limits damage to host cells. Interacts with EXTL3. In terms of processing, proteolytic processing by trypsin removes an inhibitory N-terminal propeptide and is essential for peptidoglycan binding and antibacterial activity. As to expression, low expression found in healthy pancreas.

Its subcellular location is the secreted. In terms of biological role, bactericidal C-type lectin. The lack of the EPN motif may explain its inability to bind peptidoglycan. Acts as a hormone in response to different stimuli like anti-inflammatory signals, such as IL17A, or gut microbiome. Secreted by different cell types to activate its receptor EXTL3 and induce cell specific signaling pathways. Induced by IL17A in keratinocytes, regulates keratinocyte proliferation and differentiation after skin injury via activation of EXTL3-PI3K-AKT signaling pathway. In parallel, inhibits skin inflammation through the inhibition of inflammatory cytokines such as IL6 and TNF. In pancreas, is able to permealize beta-cells membrane and stimulate their proliferation. The protein is Regenerating islet-derived protein 3-alpha (Reg3a) of Rattus norvegicus (Rat).